The chain runs to 171 residues: Replication restart protein PriC (171 aa).

It belongs to the PriC family. Monomer. Component of the replication restart primosome, which is composed of PriA, PriB, PriC, DnaBe and DnaT; DnaG primase associates transiently with this complex. Interacts with the C-terminus of SSB. SSB interaction is required to load the main replicative helicase onto substrate replication forks. Interacts with helicase DnaB alone and in the DnaB-DnaC complex, probably 1:1 binding with DnaB.

Its function is as follows. Involved in the restart of stalled replication forks, which reloads the DnaB replicative helicase on sites other than the origin of replication. In vitro can load (E.coli) DnaB replicative helicase from a DnaB-DnaC complex on a single-stranded DNA (ssDNA)-binding protein (SSB)-coated stalled replication fork with no leading- or lagging-strand in the absence of other primosome proteins (PriA, PriB or DnaT). Binds SSB (tested with E.coli protein) and ssDNA. Complements priC in an E.coli priB-priC double deletion. This is Replication restart protein PriC from Cronobacter sakazakii (strain ATCC BAA-894) (Enterobacter sakazakii).